Consider the following 650-residue polypeptide: Growth hormone receptor (650 aa).

Residues M1–A24 form the signal peptide. Residues T25–Q273 lie on the Extracellular side of the membrane. Cystine bridges form between C56-C66 and C109-C120. N123 carries N-linked (GlcNAc...) asparagine glycosylation. Cysteines 134 and 148 form a disulfide. A Fibronectin type-III domain is found at P159–T262. N-linked (GlcNAc...) asparagine glycosylation is found at N164, N169, and N208. The short motif at Y248–S252 is the WSXWS motif element. A helical membrane pass occupies residues F274–S297. At K298–Q650 the chain is on the cytoplasmic side. Residues K303–A390 are required for JAK2 binding. The Box 1 motif motif lies at I306–K314. A UbE motif motif is present at residues D349–D358. Phosphoserine is present on S350. The disordered stretch occupies residues K466–M486. A compositionally biased stretch (polar residues) spans L470 to M486. Phosphotyrosine occurs at positions 498 and 606.

The protein belongs to the type I cytokine receptor family. Type 1 subfamily. In terms of assembly, on growth hormone (GH) binding, forms homodimers and binds JAK2 via a box 1-containing domain. Post-translationally, the soluble form (GHBP) is produced by phorbol ester-promoted proteolytic cleavage at the cell surface (shedding) by ADAM17/TACE. Shedding is inhibited by growth hormone (GH) binding to the receptor probably due to a conformational change in GHR rendering the receptor inaccessible to ADAM17. In terms of processing, on GH binding, phosphorylated on tyrosine residues in the cytoplasmic domain by JAK2. Ubiquitinated by the ECS(SOCS2) complex following ligand-binding and phosphorylation by JAK2, leading to its degradation by the proteasome. Regulation by the ECS(SOCS2) complex acts as a negative feedback loop of growth hormone receptor signaling. Ubiquitination is not sufficient for GHR internalization. As to expression, expressed in all tissues tested including, liver, heart, adipose tissue, mammary gland, testes, ovary, brain, kidney and muscle. Highest levels in liver.

It is found in the cell membrane. The protein localises to the secreted. In terms of biological role, receptor for pituitary gland growth hormone (GH1) involved in regulating postnatal body growth. On ligand binding, couples to the JAK2/STAT5 pathway. Functionally, the soluble form (GHBP) acts as a reservoir of growth hormone in plasma and may be a modulator/inhibitor of GH signaling. The chain is Growth hormone receptor (Ghr) from Mus musculus (Mouse).